We begin with the raw amino-acid sequence, 300 residues long: Tyrosine recombinase XerC (300 aa).

Positions 2-88 (IQEGKLEQQF…SLRSFYTFLL (87 aa)) constitute a Core-binding (CB) domain. In terms of domain architecture, Tyr recombinase spans 109 to 294 (RLPKFFYSEE…TKEHLKSTYM (186 aa)). Catalysis depends on residues Arg-150, Lys-174, His-246, Arg-249, and His-272. Tyr-281 acts as the O-(3'-phospho-DNA)-tyrosine intermediate in catalysis.

It belongs to the 'phage' integrase family. XerC subfamily. In terms of assembly, forms a cyclic heterotetrameric complex composed of two molecules of XerC and two molecules of XerD.

The protein resides in the cytoplasm. Site-specific tyrosine recombinase, which acts by catalyzing the cutting and rejoining of the recombining DNA molecules. The XerC-XerD complex is essential to convert dimers of the bacterial chromosome into monomers to permit their segregation at cell division. It also contributes to the segregational stability of plasmids. This is Tyrosine recombinase XerC from Listeria monocytogenes serovar 1/2a (strain ATCC BAA-679 / EGD-e).